The following is a 279-amino-acid chain: Large ribosomal subunit protein uL2 (279 aa).

2 disordered regions span residues 30-59 and 225-279; these read EKSLVRPLPKKGGRNNTGRITTRHKGGGHK and VMNP…KNKR. The span at 50–59 shows a compositional bias: basic residues; that stretch reads TTRHKGGGHK. The span at 253 to 268 shows a compositional bias: basic and acidic residues; it reads PEGRTRRPNKESDKLI. Positions 269–279 are enriched in basic residues; it reads VRRRRTGKNKR.

It belongs to the universal ribosomal protein uL2 family. In terms of assembly, part of the 50S ribosomal subunit. Forms a bridge to the 30S subunit in the 70S ribosome.

Its function is as follows. One of the primary rRNA binding proteins. Required for association of the 30S and 50S subunits to form the 70S ribosome, for tRNA binding and peptide bond formation. It has been suggested to have peptidyltransferase activity; this is somewhat controversial. Makes several contacts with the 16S rRNA in the 70S ribosome. This chain is Large ribosomal subunit protein uL2, found in Kocuria rhizophila (strain ATCC 9341 / DSM 348 / NBRC 103217 / DC2201).